We begin with the raw amino-acid sequence, 301 residues long: tRNA dimethylallyltransferase (301 aa).

Position 10 to 17 (10 to 17 (GATATGKT)) interacts with ATP. Substrate is bound at residue 12 to 17 (TATGKT). The interval 35-38 (DSRQ) is interaction with substrate tRNA.

This sequence belongs to the IPP transferase family. As to quaternary structure, monomer. Mg(2+) serves as cofactor.

The catalysed reaction is adenosine(37) in tRNA + dimethylallyl diphosphate = N(6)-dimethylallyladenosine(37) in tRNA + diphosphate. Its function is as follows. Catalyzes the transfer of a dimethylallyl group onto the adenine at position 37 in tRNAs that read codons beginning with uridine, leading to the formation of N6-(dimethylallyl)adenosine (i(6)A). The protein is tRNA dimethylallyltransferase of Crocosphaera subtropica (strain ATCC 51142 / BH68) (Cyanothece sp. (strain ATCC 51142)).